Here is a 151-residue protein sequence, read N- to C-terminus: MATLLVLHGPNLNLLGTREPGHYGAVTLAQINQDLEQRARAAGHHLLYLQSNAEYELIDRIHAARNEGVDFILINPAAFTHTSVALRDALLAVSIPFIEVHLSNVHKREPFRHHSYFSDVAVGVICGLGASGYRLALESALEQLAANAQPK.

Catalysis depends on tyrosine 23, which acts as the Proton acceptor. Positions 75, 81, and 88 each coordinate substrate. Histidine 101 serves as the catalytic Proton donor. Substrate-binding positions include 102–103 (LS) and arginine 112.

This sequence belongs to the type-II 3-dehydroquinase family. As to quaternary structure, homododecamer.

It carries out the reaction 3-dehydroquinate = 3-dehydroshikimate + H2O. It participates in metabolic intermediate biosynthesis; chorismate biosynthesis; chorismate from D-erythrose 4-phosphate and phosphoenolpyruvate: step 3/7. Catalyzes a trans-dehydration via an enolate intermediate. The protein is 3-dehydroquinate dehydratase 1 (aroQ1) of Pseudomonas putida (strain ATCC 47054 / DSM 6125 / CFBP 8728 / NCIMB 11950 / KT2440).